The primary structure comprises 3595 residues: Replicase polyprotein 1ab (3595 aa).

Residues 3 to 23 (CECPRSNLVVMCSGAFCCVLC) form a C4-type; atypical zinc finger. The 109-residue stretch at 56 to 164 (SGLEGRYCAL…PTTIPFNTTG (109 aa)) folds into the Peptidase C31 domain. Residues Cys63 and His130 each act as for Nsp1-alpha papain-like cysteine proteinase activity in the active site. The region spanning 239–350 (LSFEHGRCWL…LKLPGKTYFG (112 aa)) is the Peptidase C32 domain. Residues Cys246 and His309 each act as for Nsp1-beta papain-like cysteine proteinase activity in the active site. Active-site for Nsp2 cysteine proteinase activity residues include Cys378 and His430. The tract at residues 482–527 (RRGGGKKSGQSSGVRAPGRTTPDLAGDWGKAVDDQEKTASKVTTDK) is disordered. Residues 511 to 520 (KAVDDQEKTA) are compositionally biased toward basic and acidic residues. The region spanning 633–736 (TFIPPPDGGC…HGWCSSLLSE (104 aa)) is the Peptidase C33 domain. Positions 808–862 (QVRTVDPSQPAAPLPPVPRPRKRKAAAQQVSKVPSEQDPSLAHDPPEKPDSVRPP) are disordered. Residues 851 to 860 (DPPEKPDSVR) are compositionally biased toward basic and acidic residues. The next 7 membrane-spanning stretches (helical) occupy residues 922-942 (MFFLFLGSPLFILCAVLAGVI), 951-971 (ILCCCLVVVYICTLFADAISS), 1019-1039 (VALFPLHLLLLMVDVLLVIGV), 1239-1259 (IFRTALAAAWVLFFVCAGYWV), 1316-1336 (PYIVLAACLVYLASVYVPGII), 1345-1365 (ALLPAGPAISALRTLVMIIAA), and 1381-1401 (AFVDFTSVVVVLTALLVGWIL). An HD1 region spans residues 922-1039 (MFFLFLGSPL…MVDVLLVIGV (118 aa)). The tract at residues 1239–1399 (IFRTALAAAW…VVLTALLVGW (161 aa)) is HD2. The Peptidase S32 domain maps to 1464–1664 (GLLREKTRAS…RLLESSINLE (201 aa)). Active-site charge relay system; for 3C-like serine proteinase activity residues include His1502, Asp1527, and Ser1580. Transmembrane regions (helical) follow at residues 1673-1693 (IIVAVVLWKYAVDPLSIPFVV), 1711-1731 (YNYSLFCLAAFSPLASRIFFI), 1744-1764 (ALICHACFAGIAVLNDFIILG), and 1784-1804 (AIAIAVIGALVCVAACCLELF). Residues 1687 to 1804 (LSIPFVVAFF…CVAACCLELF (118 aa)) form an HD3 region. The region spanning 2083-2253 (DMNRLRAIIS…YPYKLHPVRG (171 aa)) is the NiRAN domain. A RdRp catalytic domain is found at 2491 to 2625 (GRCLETDLAS…LNESDDLPNF (135 aa)). The AV ZBD domain maps to 2746–2812 (GKEVQVCSIC…IPILKDRTKF (67 aa)). 12 residues coordinate Zn(2+): Cys2752, Cys2755, Cys2765, Cys2770, Cys2773, His2777, His2779, Cys2782, Cys2789, His2791, Cys2798, and Cys2801. One can recognise a (+)RNA virus helicase ATP-binding domain in the interval 2862 to 3022 (DLPDGKYSMK…VFELMKKNAL (161 aa)). 2897-2904 (GPPGSGKT) serves as a coordination point for ATP. A (+)RNA virus helicase C-terminal domain is found at 3023 to 3157 (HAIYRFGQNI…DGKARVMLSD (135 aa)). Residues 3196-3292 (SGSLSPLPRV…LTKFLDGRAV (97 aa)) enclose the AV-Nsp11N/CoV-Nsp15M domain. One can recognise a NendoU domain in the interval 3294-3416 (MEDSVYSTGR…MVWRDQTMYF (123 aa)). Catalysis depends on residues His3325, His3340, and Lys3369.

This sequence belongs to the arteriviridae polyprotein family. Post-translationally, specific enzymatic cleavages in vivo by its own proteases yield mature proteins. There are two alternative pathways for processing. Either nsp4-5 is cleaved, which represents the major pathway or the nsp5-6 and nsp6-7 are processed, which represents the minor pathway. The major pathway occurs when nsp2 acts as a cofactor for nsp4.

It localises to the host membrane. Its subcellular location is the host cytoplasm. The protein localises to the host perinuclear region. It carries out the reaction RNA(n) + a ribonucleoside 5'-triphosphate = RNA(n+1) + diphosphate. The enzyme catalyses ATP + H2O = ADP + phosphate + H(+). The catalysed reaction is uridylyl-uridylyl-ribonucleotide-RNA = a 3'-end uridylyl-2',3'-cyclophospho-uridine-RNA + a 5'-end dephospho-ribonucleoside-RNA. Its function is as follows. The replicase polyprotein 1ab is a multifunctional protein: it contains the activities necessary for the transcription of negative stranded RNA, leader RNA, subgenomic mRNAs and progeny virion RNA as well as proteinases responsible for the cleavage of the polyprotein into functional products. In terms of biological role, the Nsp1 chain is essential for viral subgenomic mRNA synthesis. The 3C-like serine proteinase chain is responsible for the majority of cleavages as it cleaves the C-terminus of the polyprotein. Functionally, plays a role in viral transcription/replication and prevents the simultaneous activation of host cell dsRNA sensors, such as MDA5/IFIH1, OAS, and PKR. Acts by degrading the 5'-polyuridines generated during replication of the poly(A) region of viral genomic and subgenomic RNAs. Catalyzes a two-step reaction in which a 2'3'-cyclic phosphate (2'3'-cP) is first generated by 2'-O transesterification, which is then hydrolyzed to a 3'-phosphate (3'-P). If not degraded, poly(U) RNA would hybridize with poly(A) RNA tails and activate host dsRNA sensors. Its function is as follows. The helicase chain, which contains a zinc finger structure, displays RNA and DNA duplex-unwinding activities with 5' to 3' polarity. This Simian hemorrhagic fever virus (SHFV) protein is Replicase polyprotein 1ab (rep).